A 287-amino-acid chain; its full sequence is MSNSAKLIDVITKVALPIGIIASGIQYSMYDVKGGSRGVIFDRINGVKQQVVGEGTHFLVPWLQKAIIYDVRTKPKSIATNTGTKDLQMVSLTLRVLHRPEVLQLPAIYQNLGLDYDERVLPSIGNEVLKSIVAQFDAAELITQREIISQKIRKELSTRANEFGIKLEDVSITHMTFGPEFTKAVEQKQIAQQDAERAKFLVEKAEQERQASVIRAEGEAESAEFISKALAKVGDGLLLIRRLEASKDIAQTLANSSNVVYLPSQHSGGGNSESSGSPNSLLLNIGR.

The interval 102–116 is interaction with ATG8; the sequence is VLQLPAIYQNLGLDY. Residues 109-112 carry the AIM motif; the sequence is YQNL. The stretch at 180–224 forms a coiled coil; that stretch reads EFTKAVEQKQIAQQDAERAKFLVEKAEQERQASVIRAEGEAESAE. The disordered stretch occupies residues 264 to 287; the sequence is SQHSGGGNSESSGSPNSLLLNIGR. Residues 272 to 287 show a composition bias toward low complexity; the sequence is SESSGSPNSLLLNIGR.

It belongs to the prohibitin family. In terms of assembly, the mitochondrial prohibitin complex consists of two subunits (PHB1 and PHB2). The subunits assemble into a membrane-associated ring-shaped supercomplex of approximately 1 mDa. The mitochondrial prohibitin complex interacts with the m-AAA protease, a heterohexamer composed of YTA12/RCA1 and YTA10/AFG3. The mitochondrial prohibitin complex interacts with ATG8 and the interaction may support mitophagosome assembly. Post-translationally, the N-terminus is blocked.

The protein localises to the mitochondrion inner membrane. In terms of biological role, prohibitin probably acts as a holdase/unfoldase for the stabilization of newly synthesized mitochondrial proteins. Involved in mitophagy; may act as an adapter for ATG8 that supports mitophagosome assembly. Negatively regulates the proteolytic processing of ATG32 via the i-AAA protease. Acts as a negative regulator of the m-AAA protease. This Saccharomyces cerevisiae (strain ATCC 204508 / S288c) (Baker's yeast) protein is Prohibitin-1 (PHB1).